Consider the following 752-residue polypeptide: Protein WEAK CHLOROPLAST MOVEMENT UNDER BLUE LIGHT-like 2 (752 aa).

A Phosphoserine modification is found at Ser-143. Coiled coils occupy residues Glu-186–Ser-557 and Glu-596–Met-651. A disordered region spans residues Lys-476–Cys-495. The span at Lys-653 to Asn-675 shows a compositional bias: basic and acidic residues. The tract at residues Lys-653–Arg-733 is disordered. A compositionally biased stretch (polar residues) spans Lys-690–Pro-723.

The protein belongs to the WEB family.

The sequence is that of Protein WEAK CHLOROPLAST MOVEMENT UNDER BLUE LIGHT-like 2 (WEL2) from Arabidopsis thaliana (Mouse-ear cress).